Consider the following 867-residue polypeptide: Protein melted homolog (867 aa).

Residues 480–505 are disordered; it reads MPSSSRTNVHLSQAASSSRGHSLPQT. One can recognise a PH domain in the interval 753–860; that stretch reads EKVLEGQLKE…WLHCLQIAMA (108 aa).

The protein belongs to the MELT/VEPH family.

Its subcellular location is the cell membrane. The polypeptide is Protein melted homolog (Caenorhabditis briggsae).